The chain runs to 323 residues: Mycothiol acetyltransferase (323 aa).

Glu-44 contributes to the 1D-myo-inositol 2-(L-cysteinylamino)-2-deoxy-alpha-D-glucopyranoside binding site. 2 consecutive N-acetyltransferase domains span residues 77–176 and 173–323; these read GQDL…VSLR and VSLR…VKEG. Residue 98 to 100 participates in acetyl-CoA binding; sequence IAV. 1D-myo-inositol 2-(L-cysteinylamino)-2-deoxy-alpha-D-glucopyranoside-binding residues include Glu-200, Lys-240, and Glu-253. Residues 257 to 259 and 264 to 270 each bind acetyl-CoA; these read VGV and QGSGLGK. Tyr-291 lines the 1D-myo-inositol 2-(L-cysteinylamino)-2-deoxy-alpha-D-glucopyranoside pocket.

It belongs to the acetyltransferase family. MshD subfamily. In terms of assembly, monomer.

It catalyses the reaction 1D-myo-inositol 2-(L-cysteinylamino)-2-deoxy-alpha-D-glucopyranoside + acetyl-CoA = mycothiol + CoA + H(+). Catalyzes the transfer of acetyl from acetyl-CoA to desacetylmycothiol (Cys-GlcN-Ins) to form mycothiol. This chain is Mycothiol acetyltransferase, found in Pseudarthrobacter chlorophenolicus (strain ATCC 700700 / DSM 12829 / CIP 107037 / JCM 12360 / KCTC 9906 / NCIMB 13794 / A6) (Arthrobacter chlorophenolicus).